We begin with the raw amino-acid sequence, 177 residues long: B9 domain-containing protein 2 (177 aa).

The C2 B9-type domain maps to 2–118 (AEVHIIGQIL…EIGTWKVAPN (117 aa)).

It belongs to the B9D family. In terms of assembly, probable component of the tectonic-like complex (also named MKS complex), composed of B9d1, B9d2, Cc2d2a, Mks1 and tctn. In terms of tissue distribution, expressed in chordotonal neurons in the antennae (at protein level). Expressed in spermatids (at protein level).

The protein resides in the cytoplasm. It is found in the cytoskeleton. It localises to the cilium basal body. Probable component of the tectonic-like complex (also named MKS complex), a complex localized at the transition zone of primary cilia. Has a role in ciliary structure and function. This is B9 domain-containing protein 2 from Drosophila melanogaster (Fruit fly).